Reading from the N-terminus, the 333-residue chain is Electron transfer flavoprotein subunit alpha, mitochondrial (333 aa).

Residues 1–19 (MFRAAAPGQLRRAASLLRF) constitute a mitochondrion transit peptide. Residues 20-204 (QSTLVIAEHA…GISEWLDQKL (185 aa)) are domain I. Lys-59 is modified (N6-acetyllysine; alternate). Position 59 is an N6-succinyllysine; alternate (Lys-59). Position 62 is an N6-acetyllysine (Lys-62). Position 69 is an N6-acetyllysine; alternate (Lys-69). Lys-69 is subject to N6-succinyllysine; alternate. Lys-75 is modified (N6-acetyllysine). Lys-85 is modified (N6-acetyllysine; alternate). Lys-85 is modified (N6-succinyllysine; alternate). Position 93 is a phosphothreonine (Thr-93). 2 positions are modified to N6-acetyllysine: Lys-101 and Lys-139. Position 140 is a phosphoserine (Ser-140). Lys-158 carries the post-translational modification N6-acetyllysine; alternate. N6-succinyllysine; alternate is present on Lys-158. Lys-164 carries the post-translational modification N6-acetyllysine. Lys-187 bears the N6-succinyllysine mark. Lys-203 is modified (N6-acetyllysine; alternate). Residue Lys-203 is modified to N6-succinyllysine; alternate. The segment at 205-333 (TKSDRPELTG…PEMTEILKKK (129 aa)) is domain II. Lys-216 carries the N6-succinyllysine modification. Arg-223 is a binding site for FAD. N6-acetyllysine; alternate occurs at positions 226 and 232. N6-succinyllysine; alternate occurs at positions 226 and 232. Residues Ser-248, 263–266 (VGQT), 281–286 (SGAIQH), and Asn-300 contribute to the FAD site. Residue Lys-301 is modified to N6-succinyllysine. 318–319 (DL) is a binding site for FAD.

It belongs to the ETF alpha-subunit/FixB family. As to quaternary structure, heterodimer composed of ETFA and ETFB. Identified in a complex that contains ETFA, ETFB and ETFRF1. Interaction with ETFRF1 promotes dissociation of the bound FAD and loss of electron transfer activity. Interacts with TASOR. FAD serves as cofactor. Expressed in the spermatogonia, spermatocytes, ovary and granular cells within the cerebellum.

The protein resides in the mitochondrion matrix. Its function is as follows. Heterodimeric electron transfer flavoprotein that accepts electrons from several mitochondrial dehydrogenases, including acyl-CoA dehydrogenases, glutaryl-CoA and sarcosine dehydrogenase. It transfers the electrons to the main mitochondrial respiratory chain via ETF-ubiquinone oxidoreductase (ETF dehydrogenase). Required for normal mitochondrial fatty acid oxidation and normal amino acid metabolism. In Mus musculus (Mouse), this protein is Electron transfer flavoprotein subunit alpha, mitochondrial (Etfa).